Here is a 605-residue protein sequence, read N- to C-terminus: Elongation factor 4 (605 aa).

Positions Ser9–Ala192 constitute a tr-type G domain. Residues Asp21–Thr26 and Asn139–Asp142 contribute to the GTP site.

It belongs to the TRAFAC class translation factor GTPase superfamily. Classic translation factor GTPase family. LepA subfamily.

The protein resides in the cell inner membrane. It carries out the reaction GTP + H2O = GDP + phosphate + H(+). Required for accurate and efficient protein synthesis under certain stress conditions. May act as a fidelity factor of the translation reaction, by catalyzing a one-codon backward translocation of tRNAs on improperly translocated ribosomes. Back-translocation proceeds from a post-translocation (POST) complex to a pre-translocation (PRE) complex, thus giving elongation factor G a second chance to translocate the tRNAs correctly. Binds to ribosomes in a GTP-dependent manner. This chain is Elongation factor 4, found in Chlorobium luteolum (strain DSM 273 / BCRC 81028 / 2530) (Pelodictyon luteolum).